The following is a 303-amino-acid chain: MLWFKNLMVYRLSRDITLRAEEMEKQLASMTFTPCGSQDMAKMGWVPPMGSHSDALTHTANGQIIICARKEEKILPSPVIKQALEAKIQKLEADQGRKLKKTEKDSLKDEVLHSLLPRAFSRFSQTMMWIDTVNGLIMVDCASAKKAEDTLALLRKSLGSLPVVPLALENPIELTLTEWVRSGTVAQGFQLLDEAELKAMLEDGGVIRAKKQDLVSDEIAVHIEAGKVVTKLALDWQQRIQFVMCDDGSIKRLKFCDELRDQNEDIDREDFAQRFDADFILMTGELAALIQSLVEGLGGEAQR.

Belongs to the RdgC family.

It localises to the cytoplasm. The protein localises to the nucleoid. Functionally, may be involved in recombination. The chain is Recombination-associated protein RdgC from Salmonella agona (strain SL483).